The following is a 190-amino-acid chain: Adenine phosphoribosyltransferase (190 aa).

Belongs to the purine/pyrimidine phosphoribosyltransferase family. In terms of assembly, homodimer.

Its subcellular location is the cytoplasm. The catalysed reaction is AMP + diphosphate = 5-phospho-alpha-D-ribose 1-diphosphate + adenine. It participates in purine metabolism; AMP biosynthesis via salvage pathway; AMP from adenine: step 1/1. In terms of biological role, catalyzes a salvage reaction resulting in the formation of AMP, that is energically less costly than de novo synthesis. This is Adenine phosphoribosyltransferase from Cupriavidus pinatubonensis (strain JMP 134 / LMG 1197) (Cupriavidus necator (strain JMP 134)).